The sequence spans 2124 residues: MSASEDLQSAVQPAASEALEGFPLSPLQTRAWRRHAERPENTVVGVRLHAPADPVATLERLRRALDGEAQLRVAYRTMPGMSLPVQVLDGRAADLLVERLPGDGDWAGRFARESARLAASPLGGEGQPVLALGLLLDAAGETLQGLLLAAPAFVVDAASLVALLRRGLGPAGQASADEGDEALLFQHFSEWANEALAGEDGESASGYWREQAAVAAESPLALADDLGEGEWTARRLLPRALLERLAANGLPEAAALLAWTQVAGQFQGDEGLPLEMARLVSGRLFNEFAELAGPFAGVAPLCLENVRAGSVGERLDALQAAILAQEEAAALRDPFAPDWPLAELGFAWLAGELDGAGVAELDCRQPPLGGFLELQVLPHGEGRLASLRVRRDHDGTLAGRLLDAWVECLESIAADRQLPLAGLPLIGAAERERYQAWQGERVEPAPVESLVAAFDLRAALQPQAPALLDAHGSLDFATLRARSEAVAEALLAAGVRPGQAVAVMTGRNREAIVALLGVMRAAAVYTPVNPEFPAARVERMREAGGIVFALADAECAGRAREAFAGACLDLSTLPLAGSGMSLPAPGGRDAAYMIFTSGTSGQPKGVVVEHASALNLSQALARTVYANVVGEGLRVTVNAPFSFDSSIKQILQLLSGHCLVLVPQEVRSDPQRMLGFLEERRIDVLDCTPSLFRLLLQAGLDDAHPALPGRILVGGERFDEASWEVAAGWRRCQVFNLYGPTEATVNASLARVAEHARPTIGRALANVDLHVVDGLGRRKTRGASGELWIGGAGVARGYAGDAGEAAGRFVEEGWPGSGRLYRSGDLVRWRADGCLEFLGRIDEQVKINGYRIELGEIRSALLEHPAVGEAAVLTDEADAAEPGADRRIVAFVTAAEETADESWLEVDLPSGHRVAGLNLNETEYVYQEIFVDEVYSRDGIVLPPDAVVLDVGANIGLFSLYIASRAPRARVVAFEPLAPIRRRLEANLGRYAPQVEVFGIGLSDAEREETFTYYPGYSTFSGIAEYADASGERDVIRRYLSNQGEEGGANLLLDNIDEILDDRLRAEAHRCRLRRLDQVIGELGLERIDLLKIDVQRAEMDVLLGLDDAALAKVRQIVLEVHDKRDGATAGRADALSDLLRRHGFEVSIRQDALLEGTDRYNCYAVRPGYAESLAERIDWRALAPRPAAALGGELSEQALRGFLEARLPAYMLPSRIARVERLPLTAEGKLDRRALLAALAAEAAAQTLEAPANATEAALLEIWKSVLKRPAIGVSDNFFQVGGDSIRLIQMQVMAREAGLAFTLRDVFNHQSIRELARLLAAPASPADALGTSAPQSLEPFALLSAAERKRLPEGLDDAYPMTSLQQGMLLQSEASGDPRLLHNVVLHEVHGRLDGELLARAWAILIGRHAILRTGFDLHGGQVPLQWVHPATAVAAEVPVHDLCGLDGETRRLRLRAWIEEEQATPFDWSRPPLVRLAALALDERRFALGVAEHHSVLDGWSLQSLVDELLAVYADLLAGVVAREAEAPAVGFRDYVALEREAEANAASALFWLDYLAGARYRPLPGLAEEGPRRMAAVRVDVPADSLSRLRALAERSGLPLRSLLLAAHGRALCRFSDADEVVTGFVSHGRPEEPGADRLLGLFLNTLPCRLSASVDLLDSARRAFDYERASLEHRRHPLAAIRRRNRELRLDSLFNFVDFHQDDAAPAGVRHGGILDQVVVDVDVPLAVDFEVAGERLEVGFQYAAGRFPAERAEALAGAYREALLALLGDPVQPPAAAQAEDSVELRRVLKVLSRVLGRPLAADQGFASAGGHSLLGVQAIAELRRLTGRQLSLGLLQGDPDAREVVRRCHAADAPPLPPATERARALWLQRSGSAQPRLRLIALPPAGGNAGTFRGWDARLPADVELLAIQYPGRQERQDEPFVTDVEAMLCAIDDALLPLLDRPFALIGASLGGMLAYELAARLESLHGLRARQLFVISSRAPGPDLEYPRFHAMGDAELLRTLREYDVLPLEVLDDPELREISLATLRADSRLAADYRYRPREPLAIPITAILGEQDPGVSRVAIDGWRRHASRYELETLAGGHGLVVTAAEEVCAILRQRLAPDVPGGVPANLAT.

The adenylation stretch occupies residues 456–847; that stretch reads LRAALQPQAP…LGRIDEQVKI (392 aa). The methyltransferase stretch occupies residues 950-1147; sequence DVGANIGLFS…DLLRRHGFEV (198 aa). The Carrier 1 domain maps to 1251–1325; it reads APANATEAAL…ELARLLAAPA (75 aa). O-(pantetheine 4'-phosphoryl)serine is present on Ser1286. The tract at residues 1359–1780 is condensation; it reads DAYPMTSLQQ…ALLGDPVQPP (422 aa). A Carrier 2 domain is found at 1785 to 1859; it reads AEDSVELRRV…EVVRRCHAAD (75 aa). At Ser1819 the chain carries O-(pantetheine 4'-phosphoryl)serine. The tract at residues 1886 to 2107 is thioesterase; it reads RLIALPPAGG…AAEEVCAILR (222 aa).

Belongs to the NRP synthetase family. Pantetheine 4'-phosphate is required as a cofactor.

The enzyme catalyses holo-[peptidyl-carrier protein] + L-glutamate + ATP = L-glutamyl-[peptidyl-carrier protein] + AMP + diphosphate. Involved in the biosynthesis of the antimetabolite L-2-amino-4-methoxy-trans-3-butenoic acid (AMB), a non-proteinogenic amino acid which is toxic for prokaryotes and eukaryotes. Adenylates L-glutamate and loads it onto its first peptidyl carrier domain via a thioester linkage to the phosphopanthetheine moiety. The second peptidyl carrier domain is loaded with a L-alanine activated by AmbB. After formation by AmbB of the L-Glu-L-Ala dipeptide at the first carrier domain of AmbE, the condensation domain of AmbE probably condenses this dipeptide with the L-Ala residue attached at the second carrier domain of AmbE to give the L-Ala-L-Glu-L-Ala tripeptide. The central amino acid, L-Glu, would then undergo a series of modifications to be converted into AMB while the two flanking L-Ala residues remain in place. Finally, the L-Ala-AMB-L-Ala tripeptide is probably released by thioester cleavage via the thioester domain of AmbE. In Pseudomonas aeruginosa (strain ATCC 15692 / DSM 22644 / CIP 104116 / JCM 14847 / LMG 12228 / 1C / PRS 101 / PAO1), this protein is AMB antimetabolite synthetase AmbE.